The chain runs to 408 residues: UDP-N-acetylglucosamine--dolichyl-phosphate N-acetylglucosaminephosphotransferase (408 aa).

Residues 1–10 (MWAFPELPLP) are Lumenal-facing. A helical transmembrane segment spans residues 11–38 (LLVNLFGSLLGFVATVTLIPAFRSHFIA). Residues 39–58 (ARLCGQDLNKLSRQQIPESQ) lie on the Cytoplasmic side of the membrane. UDP-N-acetyl-alpha-D-glucosamine is bound by residues 44 to 46 (QDL) and E56. Residues 59–78 (GVICGAVFLIILFCFIPFPF) form a helical membrane-spanning segment. Residues 79-91 (LNCFVEEQCKAFP) lie on the Lumenal side of the membrane. The helical transmembrane segment at 92–118 (HHEFVALIGALLAICCMIFLGFADDVL) threads the bilayer. At 119–121 (NLP) the chain is on the cytoplasmic side. The chain crosses the membrane as a helical span at residues 122–143 (WRHKLLLPTAASLPLLMVYFTN). K125 is a binding site for dolichyl phosphate. The Lumenal segment spans residues 144–166 (FGNTTIVVPKPFRWILGLHLDLG). Residue N146 is glycosylated (N-linked (GlcNAc...) asparagine). The helical transmembrane segment at 167 to 186 (ILYYVYMGLLAVFCTNAINI) threads the bilayer. Position 178-186 (178-186 (VFCTNAINI)) interacts with dolichyl phosphate. N185 serves as a coordination point for Mg(2+). At 187–192 (LAGING) the chain is on the cytoplasmic side. A UDP-N-acetyl-alpha-D-glucosamine-binding site is contributed by N191. Residues 193-213 (LEAGQSLVISASIIVFNLVEL) traverse the membrane as a helical segment. Topologically, residues 214–218 (EGDYR) are lumenal. A helical transmembrane segment spans residues 219-242 (DDHVFSLYFMIPFFFTTLGLLYHN). Residues 243–250 (WYPSQVFV) lie on the Cytoplasmic side of the membrane. A helical transmembrane segment spans residues 251–269 (GDTFCYFAGMTFAVVGILG). Mg(2+) is bound at residue D252. At 270 to 271 (HF) the chain is on the lumenal side. A helical membrane pass occupies residues 272-293 (SKTMLLFFIPQVFNFLYSLPQL). The Cytoplasmic segment spans residues 294–375 (LHAIPCPRHR…LLLKIFGPIH (82 aa)). UDP-N-acetyl-alpha-D-glucosamine is bound at residue 301–303 (RHR). Residues 376–400 (ERNLTLLLLLLQILSSAVTFSIRYQ) traverse the membrane as a helical segment. Over 401-408 (LVRLFYDV) the chain is Lumenal.

This sequence belongs to the glycosyltransferase 4 family. In terms of assembly, homodimer. It depends on Mg(2+) as a cofactor.

The protein localises to the endoplasmic reticulum membrane. The enzyme catalyses a di-trans,poly-cis-dolichyl phosphate + UDP-N-acetyl-alpha-D-glucosamine = an N-acetyl-alpha-D-glucosaminyl-diphospho-di-trans,poly-cis-dolichol + UMP. It functions in the pathway protein modification; protein glycosylation. Its activity is regulated as follows. Inhibited by natural nucleoside antibiotic tunicamycin, which acts as a structural analog and competitor of UDP-GlcNAc. Its function is as follows. UDP-N-acetylglucosamine--dolichyl-phosphate N-acetylglucosaminephosphotransferase that operates in the biosynthetic pathway of dolichol-linked oligosaccharides, the glycan precursors employed in protein asparagine (N)-glycosylation. The assembly of dolichol-linked oligosaccharides begins on the cytosolic side of the endoplasmic reticulum membrane and finishes in its lumen. The sequential addition of sugars to dolichol pyrophosphate produces dolichol-linked oligosaccharides containing fourteen sugars, including two GlcNAcs, nine mannoses and three glucoses. Once assembled, the oligosaccharide is transferred from the lipid to nascent proteins by oligosaccharyltransferases. Catalyzes the initial step of dolichol-linked oligosaccharide biosynthesis, transfering GlcNAc-1-P from cytosolic UDP-GlcNAc onto the carrier lipid dolichyl phosphate (P-dolichol), yielding GlcNAc-P-P-dolichol embedded in the cytoplasmic leaflet of the endoplasmic reticulum membrane. The sequence is that of UDP-N-acetylglucosamine--dolichyl-phosphate N-acetylglucosaminephosphotransferase (DPAGT1) from Cricetulus longicaudatus (Long-tailed dwarf hamster).